The sequence spans 415 residues: Serine hydroxymethyltransferase (415 aa).

(6S)-5,6,7,8-tetrahydrofolate is bound by residues leucine 121 and 125–127; that span reads GHL. N6-(pyridoxal phosphate)lysine is present on lysine 230.

The protein belongs to the SHMT family. As to quaternary structure, homodimer. The cofactor is pyridoxal 5'-phosphate.

The protein resides in the cytoplasm. The enzyme catalyses (6R)-5,10-methylene-5,6,7,8-tetrahydrofolate + glycine + H2O = (6S)-5,6,7,8-tetrahydrofolate + L-serine. It functions in the pathway one-carbon metabolism; tetrahydrofolate interconversion. It participates in amino-acid biosynthesis; glycine biosynthesis; glycine from L-serine: step 1/1. Its function is as follows. Catalyzes the reversible interconversion of serine and glycine with tetrahydrofolate (THF) serving as the one-carbon carrier. This reaction serves as the major source of one-carbon groups required for the biosynthesis of purines, thymidylate, methionine, and other important biomolecules. Also exhibits THF-independent aldolase activity toward beta-hydroxyamino acids, producing glycine and aldehydes, via a retro-aldol mechanism. The chain is Serine hydroxymethyltransferase from Syntrophomonas wolfei subsp. wolfei (strain DSM 2245B / Goettingen).